The chain runs to 94 residues: Acylphosphatase (94 aa).

The region spanning 7–94 (AVQARVYGRV…TAPGDFRIVA (88 aa)) is the Acylphosphatase-like domain. Catalysis depends on residues R22 and N40.

The protein belongs to the acylphosphatase family.

It carries out the reaction an acyl phosphate + H2O = a carboxylate + phosphate + H(+). This chain is Acylphosphatase (acyP), found in Mesorhizobium japonicum (strain LMG 29417 / CECT 9101 / MAFF 303099) (Mesorhizobium loti (strain MAFF 303099)).